The following is a 758-amino-acid chain: 5-methyltetrahydropteroyltriglutamate--homocysteine methyltransferase (758 aa).

5-methyltetrahydropteroyltri-L-glutamate is bound by residues 17-20 (RELK) and K113. L-homocysteine-binding positions include 433–435 (IGS) and E486. Residues 433–435 (IGS) and E486 each bind L-methionine. 5-methyltetrahydropteroyltri-L-glutamate-binding positions include 517-518 (RC) and W563. D601 contributes to the L-homocysteine binding site. D601 lines the L-methionine pocket. E607 serves as a coordination point for 5-methyltetrahydropteroyltri-L-glutamate. 3 residues coordinate Zn(2+): H643, C645, and E667. H696 (proton donor) is an active-site residue. C728 is a Zn(2+) binding site.

It belongs to the vitamin-B12 independent methionine synthase family. The cofactor is Zn(2+).

The enzyme catalyses 5-methyltetrahydropteroyltri-L-glutamate + L-homocysteine = tetrahydropteroyltri-L-glutamate + L-methionine. The protein operates within amino-acid biosynthesis; L-methionine biosynthesis via de novo pathway; L-methionine from L-homocysteine (MetE route): step 1/1. Its function is as follows. Catalyzes the transfer of a methyl group from 5-methyltetrahydrofolate to homocysteine resulting in methionine formation. This is 5-methyltetrahydropteroyltriglutamate--homocysteine methyltransferase from Nitrosomonas europaea (strain ATCC 19718 / CIP 103999 / KCTC 2705 / NBRC 14298).